We begin with the raw amino-acid sequence, 447 residues long: Multicopper oxidase mco (447 aa).

Residues 1 to 25 (MMNMKEDKKNTMDMTNMKHHDERKK) are compositionally biased toward basic and acidic residues. The tract at residues 1 to 29 (MMNMKEDKKNTMDMTNMKHHDERKKLNSS) is disordered. Cu cation-binding residues include H107, H109, H147, H149, H375, H378, H380, H428, C429, H430, H434, and M439.

It belongs to the multicopper oxidase family. Requires Cu cation as cofactor.

The protein resides in the cytoplasm. May be involved in copper homeostasis and oxidative stress response. In Staphylococcus haemolyticus (strain JCSC1435), this protein is Multicopper oxidase mco (mco).